The sequence spans 279 residues: Tryptophan synthase alpha chain (279 aa).

Residues glutamate 50 and aspartate 61 each act as proton acceptor in the active site.

It belongs to the TrpA family. In terms of assembly, tetramer of two alpha and two beta chains.

It carries out the reaction (1S,2R)-1-C-(indol-3-yl)glycerol 3-phosphate + L-serine = D-glyceraldehyde 3-phosphate + L-tryptophan + H2O. Its pathway is amino-acid biosynthesis; L-tryptophan biosynthesis; L-tryptophan from chorismate: step 5/5. Its function is as follows. The alpha subunit is responsible for the aldol cleavage of indoleglycerol phosphate to indole and glyceraldehyde 3-phosphate. The polypeptide is Tryptophan synthase alpha chain (Rhizobium etli (strain ATCC 51251 / DSM 11541 / JCM 21823 / NBRC 15573 / CFN 42)).